The primary structure comprises 291 residues: uncharacterized protein (291 aa).

Helical transmembrane passes span 1–21 (MHNLIFAILCSVAVSVLLKIA), 26–46 (IIIEQAIAFNYITAITFSYFL), 67–87 (PIFLALGLLLPSVFIIMSKAV), 95–115 (SDAAQRLSLFLPILAAFLIFH), 117–137 (TLSQSKIIGVVLAFIGLFCLL), 149–169 (FKGVLGLIGVWFGYGIIDILF), 179–199 (FPATLFISFSLAACVMFIYLF), 208–228 (SSVIGGIVLGVLNFFNILFYI), 241–261 (VFAGMNIGVICLGTITGALVF), and 270–290 (WLGIIFSLSAIFCLYYLDKII). One can recognise an EamA domain in the interval 107 to 138 (ILAAFLIFHETLSQSKIIGVVLAFIGLFCLLT).

The protein resides in the cell membrane. This is an uncharacterized protein from Haemophilus influenzae (strain ATCC 51907 / DSM 11121 / KW20 / Rd).